The chain runs to 238 residues: Phosphoribosylaminoimidazole-succinocarboxamide synthase (238 aa).

The protein belongs to the SAICAR synthetase family.

The enzyme catalyses 5-amino-1-(5-phospho-D-ribosyl)imidazole-4-carboxylate + L-aspartate + ATP = (2S)-2-[5-amino-1-(5-phospho-beta-D-ribosyl)imidazole-4-carboxamido]succinate + ADP + phosphate + 2 H(+). It functions in the pathway purine metabolism; IMP biosynthesis via de novo pathway; 5-amino-1-(5-phospho-D-ribosyl)imidazole-4-carboxamide from 5-amino-1-(5-phospho-D-ribosyl)imidazole-4-carboxylate: step 1/2. This Alcanivorax borkumensis (strain ATCC 700651 / DSM 11573 / NCIMB 13689 / SK2) protein is Phosphoribosylaminoimidazole-succinocarboxamide synthase.